Here is a 358-residue protein sequence, read N- to C-terminus: 4-hydroxy-3-methylbut-2-en-1-yl diphosphate synthase (flavodoxin) (358 aa).

[4Fe-4S] cluster is bound by residues Cys265, Cys268, Cys300, and Glu307.

Belongs to the IspG family. [4Fe-4S] cluster is required as a cofactor.

The enzyme catalyses (2E)-4-hydroxy-3-methylbut-2-enyl diphosphate + oxidized [flavodoxin] + H2O + 2 H(+) = 2-C-methyl-D-erythritol 2,4-cyclic diphosphate + reduced [flavodoxin]. Its pathway is isoprenoid biosynthesis; isopentenyl diphosphate biosynthesis via DXP pathway; isopentenyl diphosphate from 1-deoxy-D-xylulose 5-phosphate: step 5/6. In terms of biological role, converts 2C-methyl-D-erythritol 2,4-cyclodiphosphate (ME-2,4cPP) into 1-hydroxy-2-methyl-2-(E)-butenyl 4-diphosphate. The polypeptide is 4-hydroxy-3-methylbut-2-en-1-yl diphosphate synthase (flavodoxin) (Maridesulfovibrio salexigens (strain ATCC 14822 / DSM 2638 / NCIMB 8403 / VKM B-1763) (Desulfovibrio salexigens)).